We begin with the raw amino-acid sequence, 144 residues long: Large ribosomal subunit protein uL15 (144 aa).

The interval 1–53 (MRLNTLSPAEGSKHASKRPGRGIGSGLGKTGGRGHKGQKSRSGGGVRRGFEGG) is disordered. A compositionally biased stretch (gly residues) spans 21-31 (RGIGSGLGKTG).

Belongs to the universal ribosomal protein uL15 family. In terms of assembly, part of the 50S ribosomal subunit.

In terms of biological role, binds to the 23S rRNA. This Sodalis glossinidius (strain morsitans) protein is Large ribosomal subunit protein uL15.